The primary structure comprises 894 residues: Probable ion channel SYM8 (894 aa).

A disordered region spans residues 1–124; it reads MAKSNEEPNS…PPSLPIAITK (124 aa). Composition is skewed to polar residues over residues 7-16, 24-33, and 44-63; these read EPNSNLNTNK, TLAQQPSLNL, and IGNSSSSSTKTDFEQQQRNY. 4 helical membrane passes run 134 to 154, 204 to 224, 267 to 287, and 319 to 339; these read SPIFYLFVITCVIFVPYSAFL, TISLYIVLFTLVLPFILYKYI, LALLFATLFLIAFGGLALYAV, and IVSVSISAGGMLIFAMMLGLV. RCK N-terminal domains are found at residues 360–501 and 620–769; these read RNHV…ETVV and PEKI…DKSI. The stretch at 390-415 forms a coiled coil; that stretch reads VIVVLAEKEKEEMEMDIAKLEFDFMG.

This sequence belongs to the castor/pollux (TC 1.A.1.23) family. Homotetramer.

It localises to the nucleus membrane. In terms of biological role, required for both rhizobial and mycorrhizal symbiosis. Involved in Nod-factor-induced calcium spiking. May induce a change in membrane polarization that activates the opening of a calcium channel required for calcium spiking. Might be calcium gated. The protein is Probable ion channel SYM8 (SYM8) of Pisum sativum (Garden pea).